Consider the following 291-residue polypeptide: Phosphatidylglycerol--prolipoprotein diacylglyceryl transferase (291 aa).

The next 4 membrane-spanning stretches (helical) occupy residues 24–44 (WYAL…RALL), 64–84 (FILW…VLFY), 100–120 (WNGG…VILF), and 125–145 (GLPI…GLFL). Arginine 147 contacts a 1,2-diacyl-sn-glycero-3-phospho-(1'-sn-glycerol). 3 helical membrane passes run 187–207 (AALE…LGAL), 211–231 (GLVL…AEFF), and 247–267 (MGML…YAAW).

This sequence belongs to the Lgt family.

It localises to the cell inner membrane. It carries out the reaction L-cysteinyl-[prolipoprotein] + a 1,2-diacyl-sn-glycero-3-phospho-(1'-sn-glycerol) = an S-1,2-diacyl-sn-glyceryl-L-cysteinyl-[prolipoprotein] + sn-glycerol 1-phosphate + H(+). The protein operates within protein modification; lipoprotein biosynthesis (diacylglyceryl transfer). Catalyzes the transfer of the diacylglyceryl group from phosphatidylglycerol to the sulfhydryl group of the N-terminal cysteine of a prolipoprotein, the first step in the formation of mature lipoproteins. The sequence is that of Phosphatidylglycerol--prolipoprotein diacylglyceryl transferase from Nitrobacter winogradskyi (strain ATCC 25391 / DSM 10237 / CIP 104748 / NCIMB 11846 / Nb-255).